A 91-amino-acid polypeptide reads, in one-letter code: Transcription factor ILI7 (91 aa).

In terms of domain architecture, bHLH spans Arg-4 to Leu-58.

It belongs to the bHLH protein family.

Its function is as follows. Atypical and probable non DNA-binding bHLH transcription factor that integrates multiple signaling pathways to regulate cell elongation and plant development. The protein is Transcription factor ILI7 (ILI7) of Oryza sativa subsp. indica (Rice).